A 427-amino-acid chain; its full sequence is Peptidase B (427 aa).

Mn(2+)-binding residues include Lys-195 and Asp-200. Residue Lys-207 is part of the active site. The Mn(2+) site is built by Asp-218, Asp-277, and Glu-279. Arg-281 is an active-site residue.

It belongs to the peptidase M17 family. As to quaternary structure, homohexamer. The cofactor is Mn(2+).

It localises to the cytoplasm. The catalysed reaction is Release of an N-terminal amino acid, Xaa, from a peptide or arylamide. Xaa is preferably Glu or Asp but may be other amino acids, including Leu, Met, His, Cys and Gln.. Functionally, probably plays an important role in intracellular peptide degradation. The sequence is that of Peptidase B from Shigella dysenteriae serotype 1 (strain Sd197).